We begin with the raw amino-acid sequence, 360 residues long: Cyclin-Y-like protein 2 (360 aa).

The 83-residue stretch at 204–286 (RLTAEFAIVS…FLKLINYNIG (83 aa)) folds into the Cyclin N-terminal domain.

The protein belongs to the cyclin family. Cyclin Y subfamily.

This is Cyclin-Y-like protein 2 (CCNYL2) from Macaca fascicularis (Crab-eating macaque).